The following is a 415-amino-acid chain: Exodeoxyribonuclease 7 large subunit (415 aa).

This sequence belongs to the XseA family. Heterooligomer composed of large and small subunits.

The protein resides in the cytoplasm. The catalysed reaction is Exonucleolytic cleavage in either 5'- to 3'- or 3'- to 5'-direction to yield nucleoside 5'-phosphates.. Bidirectionally degrades single-stranded DNA into large acid-insoluble oligonucleotides, which are then degraded further into small acid-soluble oligonucleotides. This Mycobacterium bovis (strain ATCC BAA-935 / AF2122/97) protein is Exodeoxyribonuclease 7 large subunit.